A 174-amino-acid polypeptide reads, in one-letter code: MRPVAPEKDGPRVNEEIRIREVQLIDQDGQNRGVLPTRDALLLAQEAGLDLVEISPNSSPPVCKILDFGRFKYQNQKKASEARKKQKVVEVKEIKLRPGIDTHDYDVKMKAMLRFFEEGDKVKVTLRFRGREMAHQDIGYKLLQKLKEDVTNIAKVEAEPMLEGRQMIMILAPR.

It belongs to the IF-3 family. Monomer.

The protein resides in the cytoplasm. Functionally, IF-3 binds to the 30S ribosomal subunit and shifts the equilibrium between 70S ribosomes and their 50S and 30S subunits in favor of the free subunits, thus enhancing the availability of 30S subunits on which protein synthesis initiation begins. The chain is Translation initiation factor IF-3 from Azorhizobium caulinodans (strain ATCC 43989 / DSM 5975 / JCM 20966 / LMG 6465 / NBRC 14845 / NCIMB 13405 / ORS 571).